We begin with the raw amino-acid sequence, 1131 residues long: MSSSRPAHSSSSSSRTRQSSQARILAQTTLDAELNAEYEESGDSFDYSKLVEAQRSTPSEQQGRSGKVIAYLQHIQRGKLIQPFGCLLALDEKSFRVIAFSENAPEMLTTVSHAVPNVDDPPKLGIGTNVRSLFTDPGATALQKALGFADVSLLNPILVQCKTSGKPFYAIVHRATGCLVVDFEPVKPTEFPATAAGALQSYKLAAKAISKIQSLPGGSMEALCNTVVKEVFELTGYDRVMAYKFHEDEHGEVFAEITKPGIEPYLGLHYPATDIPQAARFLFMKNKVRMICDCRAKSVKIIEDEALSIDISLCGSTLRAPHSCHLQYMENMNSIASLVMAVVVNENEEDDEPGPEQPPQQQKKKRLWGLIVCHHESPRYVPFPLRYACEFLAQVFAVHVNKEFELEKQIREKSILRMQTMLSDMLFKEASPLSIVSGSPNIMDLVKCDGAALLYGDKVWRLQTAPTESQIRDIAFWLSEVHGDSTGLSTDSLQDAGYPGAASLGDMICGMAVAKITSKDILFWFRSHTAAEIKWGGAKHDPSDKDDNRRMHPRLSFKAFLEVVKMKSLPWSDYEMDAIHSLQLILRGTLNDALKPVQASGLDNQIGDLKLDGLAELQAVTSEMVRLMETATVPILAVDGNGLVNGWNQKVAELSGLRVDEAIGRHILTLVEDSSVSIVQRMLYLALQGKEEKEVRFELKTHGSKRDDGPVILVVNACASRDLHDHVVGVCFVAQDMTVHKLVMDKFTRVEGDYKAIIHNPNPLIPPIFGADQFGWCSEWNVAMTKLTGWHRDEVIDKMLLGEVFDSSNASCLLKSKDDFVRLCIIINSALAGEEAENAPFGLFDRNGKYIECLLSVNRKVNADGVVTGVFCFIHVPSDDLQHALHVQQASEQTAQRRLKAFSYMRHAINKPLSGMLYSRETLKSTGLNEEQMRQVHVADSCHRQLNKILADLDQDNITDKSSCLDLDMAEFVLEDVVVSAVSQVLIGCQGKGIRVACNLPERFMKQKVYGDGIRLQQILSDFLFVSVKFSPVGGSVDISSKLTKNSIGENLHLIDFELRIKHQGAGVPAEILSQMYEEDNKEPSEEGLSLLVSRNLLRLMNGNIRHIREAGMSTFILTAELAAAPSAVGQ.

Over residues 1 to 23 the composition is skewed to low complexity; sequence MSSSRPAHSSSSSSRTRQSSQAR. The tract at residues 1–26 is disordered; that stretch reads MSSSRPAHSSSSSSRTRQSSQARILA. The GAF domain occupies 219 to 404; sequence SMEALCNTVV…VFAVHVNKEF (186 aa). C324 lines the phytochromobilin pocket. PAS domains are found at residues 620 to 690 and 750 to 834; these read VTSE…LQGK and VEGD…LAGE. Residues 904-1124 form the Histidine kinase domain; it reads YMRHAINKPL…TFILTAELAA (221 aa).

This sequence belongs to the phytochrome family. Homodimer. In terms of processing, contains one covalently linked phytochromobilin chromophore.

In terms of biological role, regulatory photoreceptor which exists in two forms that are reversibly interconvertible by light: the Pr form that absorbs maximally in the red region of the spectrum and the Pfr form that absorbs maximally in the far-red region. Photoconversion of Pr to Pfr induces an array of morphogenic responses, whereas reconversion of Pfr to Pr cancels the induction of those responses. Pfr controls the expression of a number of nuclear genes including those encoding the small subunit of ribulose-bisphosphate carboxylase, chlorophyll A/B binding protein, protochlorophyllide reductase, rRNA, etc. It also controls the expression of its own gene(s) in a negative feedback fashion. This is Phytochrome a (PHYA) from Sorghum bicolor (Sorghum).